A 913-amino-acid chain; its full sequence is Protein translocase subunit SecA (913 aa).

Residues Gln87, Gly105–Thr109, and Asp517 each bind ATP. 2 disordered regions span residues Glu568–Ser588 and Glu871–Ser913. Zn(2+)-binding residues include Cys897, Cys899, Cys908, and His909. The segment covering Lys903–Ser913 has biased composition (basic residues).

The protein belongs to the SecA family. In terms of assembly, monomer and homodimer. Part of the essential Sec protein translocation apparatus which comprises SecA, SecYEG and auxiliary proteins SecDF-YajC and YidC. Zn(2+) is required as a cofactor.

The protein localises to the cell inner membrane. The protein resides in the cytoplasm. It carries out the reaction ATP + H2O + cellular proteinSide 1 = ADP + phosphate + cellular proteinSide 2.. In terms of biological role, part of the Sec protein translocase complex. Interacts with the SecYEG preprotein conducting channel. Has a central role in coupling the hydrolysis of ATP to the transfer of proteins into and across the cell membrane, serving both as a receptor for the preprotein-SecB complex and as an ATP-driven molecular motor driving the stepwise translocation of polypeptide chains across the membrane. This Coxiella burnetii (strain RSA 493 / Nine Mile phase I) protein is Protein translocase subunit SecA.